A 595-amino-acid polypeptide reads, in one-letter code: Chaperone protein HscA homolog (595 aa).

Belongs to the heat shock protein 70 family.

Its function is as follows. Chaperone involved in the maturation of iron-sulfur cluster-containing proteins. Has a low intrinsic ATPase activity which is markedly stimulated by HscB. This is Chaperone protein HscA homolog from Rickettsia conorii (strain ATCC VR-613 / Malish 7).